A 204-amino-acid polypeptide reads, in one-letter code: FMN-dependent NADH:quinone oxidoreductase (204 aa).

FMN-binding positions include Ser10, 15–17 (SLS), and 139–142 (TSGG).

It belongs to the azoreductase type 1 family. As to quaternary structure, homodimer. FMN serves as cofactor.

It carries out the reaction 2 a quinone + NADH + H(+) = 2 a 1,4-benzosemiquinone + NAD(+). The catalysed reaction is N,N-dimethyl-1,4-phenylenediamine + anthranilate + 2 NAD(+) = 2-(4-dimethylaminophenyl)diazenylbenzoate + 2 NADH + 2 H(+). In terms of biological role, quinone reductase that provides resistance to thiol-specific stress caused by electrophilic quinones. Also exhibits azoreductase activity. Catalyzes the reductive cleavage of the azo bond in aromatic azo compounds to the corresponding amines. This chain is FMN-dependent NADH:quinone oxidoreductase, found in Rhizobium leguminosarum bv. trifolii (strain WSM2304).